A 539-amino-acid chain; its full sequence is Dihydrolipoyllysine-residue acetyltransferase component 3 of pyruvate dehydrogenase complex, mitochondrial (539 aa).

The transit peptide at 1–102 (MAYASRIINH…SCLMQSARGF (102 aa)) directs the protein to the mitochondrion. One can recognise a Lipoyl-binding domain in the interval 111 to 187 (HQEIGMPSLS…QVGEVIAITV (77 aa)). Position 152 is an N6-lipoyllysine (K152). The disordered stretch occupies residues 195 to 247 (KFKDYTPSSTADAAPTKAEPTPAPPKEEKVKQPSSPPEPKASKPSTPPTGDRV). The span at 204–214 (TADAAPTKAEP) shows a compositional bias: low complexity. A Peripheral subunit-binding (PSBD) domain is found at 248–285 (FASPLARKLAEDNNVPLSDIEGTGPEGRIVKADIDEYL). Residues H512 and D516 contribute to the active site.

The protein belongs to the 2-oxoacid dehydrogenase family. (R)-lipoate serves as cofactor.

The protein localises to the mitochondrion matrix. It catalyses the reaction N(6)-[(R)-dihydrolipoyl]-L-lysyl-[protein] + acetyl-CoA = N(6)-[(R)-S(8)-acetyldihydrolipoyl]-L-lysyl-[protein] + CoA. Functionally, the pyruvate dehydrogenase complex catalyzes the overall conversion of pyruvate to acetyl-CoA and CO(2). It contains multiple copies of three enzymatic components: pyruvate dehydrogenase (E1), dihydrolipoamide acetyltransferase (E2) and lipoamide dehydrogenase (E3). In Arabidopsis thaliana (Mouse-ear cress), this protein is Dihydrolipoyllysine-residue acetyltransferase component 3 of pyruvate dehydrogenase complex, mitochondrial.